The following is a 412-amino-acid chain: Adenosine receptor A2a (412 aa).

Residues 1 to 7 lie on the Extracellular side of the membrane; that stretch reads MPTVGSL. A helical transmembrane segment spans residues 8–32; it reads VYIMVELAIALLAILGNMLVCWAVW. Topologically, residues 33-42 are cytoplasmic; it reads LNSNLQNVTN. Residues 43–66 form a helical membrane-spanning segment; sequence YFVVSLAAADIAVGVLAIPFAITI. The Extracellular segment spans residues 67–77; that stretch reads STGFCAACHGC. 3 cysteine pairs are disulfide-bonded: Cys71–Cys159, Cys74–Cys146, and Cys77–Cys166. Residues 78-100 form a helical membrane-spanning segment; that stretch reads LFIACFVLVLTQSSIFSLLAIAI. The Cytoplasmic segment spans residues 101-120; it reads DRYIAIRIPLRYNGLVTGTR. A helical transmembrane segment spans residues 121-143; sequence AKGVIAVCWVLSFAIGLTPMLGW. Residues 144–173 are Extracellular-facing; it reads NNCHHWGEGENQSQGCGEGQVACLFEDVVP. N-linked (GlcNAc...) asparagine glycosylation is present at Asn154. Adenosine is bound at residue Glu169. Residues 174–198 form a helical membrane-spanning segment; sequence MNYMVYYNFFACVLVPLLLMLGVYL. Residues 199 to 234 lie on the Cytoplasmic side of the membrane; the sequence is RIFLAARRQLKQMETQPLPGERARSTLQKEVHAAKS. The helical transmembrane segment at 235 to 258 threads the bilayer; that stretch reads LAIIVGLFALCWLPLHIINCFTFF. Asn253 contacts adenosine. Cys259 and Cys262 are disulfide-bonded. Topologically, residues 259-266 are extracellular; that stretch reads CPECPHAP. Residues 267-290 form a helical membrane-spanning segment; the sequence is LWLMYPAIILSHFNSVVNPFIYAY. Adenosine contacts are provided by Ser277 and His278. The Cytoplasmic segment spans residues 291–412; the sequence is RIREFRHTFH…PLAQDGAGVS (122 aa). The disordered stretch occupies residues 368–412; sequence RASARESPGDTGLPDVELLSHELHGASPESPGLEGPLAQDGAGVS.

This sequence belongs to the G-protein coupled receptor 1 family. Interacts (via cytoplasmic C-terminal domain) with USP4; the interaction is direct. May interact with DRD4. Interacts with NECAB2. Interacts (via cytoplasmic C-terminal domain) with GAS2L2; interaction enhances receptor-mediated adenylyl cyclase activity. Post-translationally, ubiquitinated. Deubiquitinated by USP4; leading to stabilization and expression at the cell surface.

It localises to the cell membrane. In terms of biological role, receptor for adenosine. The activity of this receptor is mediated by G proteins which activate adenylyl cyclase. This chain is Adenosine receptor A2a (ADORA2A), found in Equus caballus (Horse).